The following is a 494-amino-acid chain: BUB3-interacting and GLEBS motif-containing protein ZNF207 (494 aa).

A microtubule-binding region region spans residues 1–92 (MGRKKKKQLK…EGIPEKDMDE (92 aa)). 2 consecutive C2H2-type zinc fingers follow at residues 11–34 (PWCW…KAKH) and 35–58 (FKCH…MQVH). Positions 100–111 (KTQESQKKKQQD) are enriched in basic and acidic residues. Disordered regions lie at residues 100–161 (KTQE…PGIP), 250–377 (NRPP…SATS), and 455–494 (LPGA…GGRY). Acidic residues predominate over residues 112–121 (DSDEYDDDDS). Residues 127–136 (FQPQPVQPQQ) are compositionally biased toward polar residues. The segment covering 142–161 (MAQPGLPPVPGAPGMPPGIP) has biased composition (pro residues). Residues 283–300 (SSSTASSNSESLSASSKA) show a composition bias toward low complexity. Residues 323 to 332 (LNSTPATSTE) are compositionally biased toward polar residues. A compositionally biased stretch (low complexity) spans 342–377 (TQSTASTTSTTNSTAAKPAASITSKPATLTTTSATS). Residues 375–407 (ATSKLIHPDEDISLEERRAQLPKYQRNLPRPGQ) are GLEBS. Pro residues predominate over residues 463–483 (GQGPPMVPPYQGGPPRPPMGM).

Interacts (via GLEBS region) with BUB3.

The protein resides in the nucleus. It is found in the chromosome. It localises to the centromere. The protein localises to the kinetochore. Its subcellular location is the cytoplasm. The protein resides in the cytoskeleton. It is found in the spindle. In terms of biological role, kinetochore- and microtubule-binding protein that plays a key role in spindle assembly. ZNF207/BuGZ is mainly composed of disordered low-complexity regions and undergoes phase transition or coacervation to form temperature-dependent liquid droplets. Coacervation promotes microtubule bundling and concentrates tubulin, promoting microtubule polymerization and assembly of spindle and spindle matrix by concentrating its building blocks. Also acts as a regulator of mitotic chromosome alignment by mediating the stability and kinetochore loading of BUB3. Mechanisms by which BUB3 is protected are unclear: according to a first report, ZNF207/BuGZ may act by blocking ubiquitination and proteasomal degradation of BUB3. According to another report, the stabilization is independent of the proteasome. This chain is BUB3-interacting and GLEBS motif-containing protein ZNF207, found in Pongo abelii (Sumatran orangutan).